The primary structure comprises 448 residues: ATP-dependent protease ATPase subunit HslU (448 aa).

ATP is bound by residues Ile-18, 60–65, Asp-261, Glu-326, and Arg-398; that span reads GVGKTE.

The protein belongs to the ClpX chaperone family. HslU subfamily. A double ring-shaped homohexamer of HslV is capped on each side by a ring-shaped HslU homohexamer. The assembly of the HslU/HslV complex is dependent on binding of ATP.

Its subcellular location is the cytoplasm. Its function is as follows. ATPase subunit of a proteasome-like degradation complex; this subunit has chaperone activity. The binding of ATP and its subsequent hydrolysis by HslU are essential for unfolding of protein substrates subsequently hydrolyzed by HslV. HslU recognizes the N-terminal part of its protein substrates and unfolds these before they are guided to HslV for hydrolysis. In Paraburkholderia xenovorans (strain LB400), this protein is ATP-dependent protease ATPase subunit HslU.